Reading from the N-terminus, the 315-residue chain is Ribosomal protein L11 methyltransferase (315 aa).

4 residues coordinate S-adenosyl-L-methionine: Thr152, Gly185, Asp207, and Asn249.

It belongs to the methyltransferase superfamily. PrmA family.

It is found in the cytoplasm. The enzyme catalyses L-lysyl-[protein] + 3 S-adenosyl-L-methionine = N(6),N(6),N(6)-trimethyl-L-lysyl-[protein] + 3 S-adenosyl-L-homocysteine + 3 H(+). Functionally, methylates ribosomal protein L11. The sequence is that of Ribosomal protein L11 methyltransferase from Geotalea uraniireducens (strain Rf4) (Geobacter uraniireducens).